The sequence spans 235 residues: Aspartate/glutamate leucyltransferase (235 aa).

Belongs to the R-transferase family. Bpt subfamily.

The protein localises to the cytoplasm. The enzyme catalyses N-terminal L-glutamyl-[protein] + L-leucyl-tRNA(Leu) = N-terminal L-leucyl-L-glutamyl-[protein] + tRNA(Leu) + H(+). It carries out the reaction N-terminal L-aspartyl-[protein] + L-leucyl-tRNA(Leu) = N-terminal L-leucyl-L-aspartyl-[protein] + tRNA(Leu) + H(+). Functions in the N-end rule pathway of protein degradation where it conjugates Leu from its aminoacyl-tRNA to the N-termini of proteins containing an N-terminal aspartate or glutamate. The sequence is that of Aspartate/glutamate leucyltransferase from Pseudomonas entomophila (strain L48).